Consider the following 430-residue polypeptide: MFQTFVRFFTTKEVRNKIFFTLAMLVIFKIGTYIPAPGVNPEAFNHPQGSQGATELLNTFGGGALKRFSIFAMGIMPYITASIVMQLLQMDIVPKFTEWAKQGEMGRRKINNVTRYFAIILAFIQSIGMAFQFNNYLKGQLIIEKSVMSYLLIAVVLTAGTAFLIWLGDQITQFGVGNGISLIIFAGILSTLPSSLEQFAQSVFVGQDDTSLAWLKILGLIVALILLTVGAIFVLEAKRKIPIQYAKKQSAQRLGSQATYLPLKVNSAGVIPVIFAMAFFLLPRTLTLFFPKAEWAQNIADTANPSSNIGMIIYVVLIIAFAYFYAFVQVNPEKMADNLKKQGSYVPGIRPGEQTKKYITKVLYRLTFVGSIFLAAIAILPIIATKFMGLPQSIQIGGTSLLIVIGVAIETMKTLEAQVTQKEYKGFGGR.

The next 10 membrane-spanning stretches (helical) occupy residues 18–38 (IFFTLAMLVIFKIGTYIPAPG), 68–88 (FSIFAMGIMPYITASIVMQLL), 117–137 (FAIILAFIQSIGMAFQFNNYL), 147–167 (VMSYLLIAVVLTAGTAFLIWL), 174–194 (FGVGNGISLIIFAGILSTLPS), 217–237 (ILGLIVALILLTVGAIFVLEA), 270–290 (VIPVIFAMAFFLLPRTLTLFF), 308–328 (NIGMIIYVVLIIAFAYFYAFV), 368–388 (FVGSIFLAAIAILPIIATKFM), and 389–409 (GLPQSIQIGGTSLLIVIGVAI).

This sequence belongs to the SecY/SEC61-alpha family. Component of the Sec protein translocase complex. Heterotrimer consisting of SecY, SecE and SecG subunits. The heterotrimers can form oligomers, although 1 heterotrimer is thought to be able to translocate proteins. Interacts with the ribosome. Interacts with SecDF, and other proteins may be involved. Interacts with SecA.

It localises to the cell membrane. Its function is as follows. The central subunit of the protein translocation channel SecYEG. Consists of two halves formed by TMs 1-5 and 6-10. These two domains form a lateral gate at the front which open onto the bilayer between TMs 2 and 7, and are clamped together by SecE at the back. The channel is closed by both a pore ring composed of hydrophobic SecY resides and a short helix (helix 2A) on the extracellular side of the membrane which forms a plug. The plug probably moves laterally to allow the channel to open. The ring and the pore may move independently. The chain is Protein translocase subunit SecY from Staphylococcus epidermidis (strain ATCC 35984 / DSM 28319 / BCRC 17069 / CCUG 31568 / BM 3577 / RP62A).